The primary structure comprises 152 residues: UPF0266 membrane protein YobD (152 aa).

The next 3 membrane-spanning stretches (helical) occupy residues 6-26, 45-65, and 67-87; these read LVLI…QFIM, VDSV…VTSH, and AQMT…IFWI.

The protein belongs to the UPF0266 family.

It localises to the cell inner membrane. This Salmonella choleraesuis (strain SC-B67) protein is UPF0266 membrane protein YobD.